The chain runs to 273 residues: Shikimate dehydrogenase (NADP(+)) (273 aa).

Shikimate is bound by residues 15-17 (SQS) and threonine 62. Lysine 66 functions as the Proton acceptor in the catalytic mechanism. Glutamate 78 contacts NADP(+). Shikimate contacts are provided by asparagine 87 and aspartate 102. NADP(+) is bound by residues 127-131 (GAGGA), 151-156 (NRTVIK), and methionine 215. Tyrosine 217 provides a ligand contact to shikimate. NADP(+) is bound at residue glycine 239.

The protein belongs to the shikimate dehydrogenase family. In terms of assembly, homodimer.

The enzyme catalyses shikimate + NADP(+) = 3-dehydroshikimate + NADPH + H(+). Its pathway is metabolic intermediate biosynthesis; chorismate biosynthesis; chorismate from D-erythrose 4-phosphate and phosphoenolpyruvate: step 4/7. Functionally, involved in the biosynthesis of the chorismate, which leads to the biosynthesis of aromatic amino acids. Catalyzes the reversible NADPH linked reduction of 3-dehydroshikimate (DHSA) to yield shikimate (SA). This chain is Shikimate dehydrogenase (NADP(+)), found in Chromobacterium violaceum (strain ATCC 12472 / DSM 30191 / JCM 1249 / CCUG 213 / NBRC 12614 / NCIMB 9131 / NCTC 9757 / MK).